The chain runs to 525 residues: Peptide chain release factor 3 (525 aa).

In terms of domain architecture, tr-type G spans alanine 9 to glutamine 276. Residues serine 18–threonine 25, aspartate 86–histidine 90, and asparagine 140–aspartate 143 each bind GTP.

Belongs to the TRAFAC class translation factor GTPase superfamily. Classic translation factor GTPase family. PrfC subfamily.

The protein resides in the cytoplasm. Increases the formation of ribosomal termination complexes and stimulates activities of RF-1 and RF-2. It binds guanine nucleotides and has strong preference for UGA stop codons. It may interact directly with the ribosome. The stimulation of RF-1 and RF-2 is significantly reduced by GTP and GDP, but not by GMP. The protein is Peptide chain release factor 3 of Francisella tularensis subsp. holarctica (strain FTNF002-00 / FTA).